Here is a 212-residue protein sequence, read N- to C-terminus: N-(5'-phosphoribosyl)anthranilate isomerase (212 aa).

This sequence belongs to the TrpF family.

The catalysed reaction is N-(5-phospho-beta-D-ribosyl)anthranilate = 1-(2-carboxyphenylamino)-1-deoxy-D-ribulose 5-phosphate. It participates in amino-acid biosynthesis; L-tryptophan biosynthesis; L-tryptophan from chorismate: step 3/5. The protein is N-(5'-phosphoribosyl)anthranilate isomerase of Cereibacter sphaeroides (strain ATCC 17029 / ATH 2.4.9) (Rhodobacter sphaeroides).